Reading from the N-terminus, the 345-residue chain is Tyrosine--tRNA ligase (345 aa).

An L-tyrosine-binding site is contributed by Tyr36. Positions 41–49 (PTGEMHIGH) match the 'HIGH' region motif. Tyr163, Gln167, Asp170, and Gln185 together coordinate L-tyrosine.

It belongs to the class-I aminoacyl-tRNA synthetase family. TyrS type 3 subfamily. Homodimer.

Its subcellular location is the cytoplasm. The enzyme catalyses tRNA(Tyr) + L-tyrosine + ATP = L-tyrosyl-tRNA(Tyr) + AMP + diphosphate + H(+). Functionally, catalyzes the attachment of tyrosine to tRNA(Tyr) in a two-step reaction: tyrosine is first activated by ATP to form Tyr-AMP and then transferred to the acceptor end of tRNA(Tyr). This is Tyrosine--tRNA ligase from Natronomonas pharaonis (strain ATCC 35678 / DSM 2160 / CIP 103997 / JCM 8858 / NBRC 14720 / NCIMB 2260 / Gabara) (Halobacterium pharaonis).